The chain runs to 265 residues: MKEDSALIIGGKNFSSRLMVGTGKYTSAEVMVESLLNTESEIVTVAVRRVQNHQNGENLLEKIDWEKFWMLPNTAGCANADEAVRIAILGRELAKLSGQEENNFVKLEVIPDKKYLLPDPIETLKAAEILIKKDFIVLPYINADPILAKKLEEIGCSTVMPLGSPIGSGQGLLNLSNISIIIENSNIPVIIDAGIGVPSEASQAMELGADGVLINSAIALAKDPLKMAKAMNHGVRAGREAFLAGRIEKQRLASASSPFTNISKK.

Catalysis depends on Lys-106, which acts as the Schiff-base intermediate with DXP. 1-deoxy-D-xylulose 5-phosphate contacts are provided by residues Gly-167, 193–194, and 215–216; these read AG and NS.

Belongs to the ThiG family. As to quaternary structure, homotetramer. Forms heterodimers with either ThiH or ThiS.

It localises to the cytoplasm. It catalyses the reaction [ThiS sulfur-carrier protein]-C-terminal-Gly-aminoethanethioate + 2-iminoacetate + 1-deoxy-D-xylulose 5-phosphate = [ThiS sulfur-carrier protein]-C-terminal Gly-Gly + 2-[(2R,5Z)-2-carboxy-4-methylthiazol-5(2H)-ylidene]ethyl phosphate + 2 H2O + H(+). It participates in cofactor biosynthesis; thiamine diphosphate biosynthesis. Its function is as follows. Catalyzes the rearrangement of 1-deoxy-D-xylulose 5-phosphate (DXP) to produce the thiazole phosphate moiety of thiamine. Sulfur is provided by the thiocarboxylate moiety of the carrier protein ThiS. In vitro, sulfur can be provided by H(2)S. This chain is Thiazole synthase, found in Prochlorococcus marinus (strain MIT 9515).